A 722-amino-acid chain; its full sequence is Glycine--tRNA ligase beta subunit (722 aa).

This sequence belongs to the class-II aminoacyl-tRNA synthetase family. As to quaternary structure, tetramer of two alpha and two beta subunits.

It is found in the cytoplasm. It carries out the reaction tRNA(Gly) + glycine + ATP = glycyl-tRNA(Gly) + AMP + diphosphate. The sequence is that of Glycine--tRNA ligase beta subunit from Xylella fastidiosa (strain M12).